Here is an 815-residue protein sequence, read N- to C-terminus: ABC transporter G family member 7 (815 aa).

Disordered stretches follow at residues 81-141 (NNID…TPNF) and 177-249 (KQIK…TNGK). The stretch at 164 to 199 (ENISYKTENRNYKKQIKDEKKRKKKLEMERSNSSNS) forms a coiled coil. Residues 194 to 210 (SNSSNSNSSYDVESSAS) show a composition bias toward low complexity. Residues 211–248 (GLQTPQQSRSSILPTNSLNISKIDQSMNPQQTRSTTNG) are compositionally biased toward polar residues. In terms of domain architecture, ABC transporter spans 242–485 (TRSTTNGKIE…SLPNQYQCPN (244 aa)). Position 274 to 281 (274 to 281 (GPSGSGKS)) interacts with ATP. The ABC transmembrane type-2 domain occupies 562-810 (TQYITRLSGG…VSGYWAISKL (249 aa)). Helical transmembrane passes span 568–588 (LSGG…LSPS), 598–618 (ILFF…TLFL), 647–667 (AFIQ…INHL), 675–695 (FITY…IIAI), 706–726 (FIYG…LVPV), 732–752 (SFGW…VMVA), and 788–808 (GIGI…WAIS).

Belongs to the ABC transporter superfamily. ABCG family.

The protein localises to the membrane. This Dictyostelium discoideum (Social amoeba) protein is ABC transporter G family member 7 (abcG7).